The sequence spans 1488 residues: Chromosome partition protein MukB (1488 aa).

Residue 34–41 (GGNGAGKS) participates in ATP binding. Coiled coils occupy residues 326 to 418 (LEAD…QYNQ), 444 to 472 (LDTFQAKEQEATEKLLSLEQKMSVAQTAH), and 509 to 602 (RHLA…RRAP). The tract at residues 666–783 (PGGAEDQRLN…SLPIFGRAAR (118 aa)) is flexible hinge. Coiled coils occupy residues 835-923 (EAEI…AKLE), 977-1116 (EMLS…AKAG), and 1209-1265 (VEAI…LQSV). Positions 1049-1074 (ADSGAEERARQRRDELHAQLSNNRSR) are disordered. Basic and acidic residues predominate over residues 1051-1065 (SGAEERARQRRDELH).

This sequence belongs to the SMC family. MukB subfamily. Homodimerization via its hinge domain. Binds to DNA via its C-terminal region. Interacts, and probably forms a ternary complex, with MukE and MukF via its C-terminal region. The complex formation is stimulated by calcium or magnesium. Interacts with tubulin-related protein FtsZ.

The protein localises to the cytoplasm. Its subcellular location is the nucleoid. Its function is as follows. Plays a central role in chromosome condensation, segregation and cell cycle progression. Functions as a homodimer, which is essential for chromosome partition. Involved in negative DNA supercoiling in vivo, and by this means organize and compact chromosomes. May achieve or facilitate chromosome segregation by condensation DNA from both sides of a centrally located replisome during cell division. This Salmonella agona (strain SL483) protein is Chromosome partition protein MukB.